Consider the following 142-residue polypeptide: Small ribosomal subunit protein uS12 (142 aa).

This sequence belongs to the universal ribosomal protein uS12 family. Part of the 30S ribosomal subunit.

Functionally, with S4 and S5 plays an important role in translational accuracy. Located at the interface of the 30S and 50S subunits. This is Small ribosomal subunit protein uS12 from Methanoregula boonei (strain DSM 21154 / JCM 14090 / 6A8).